Consider the following 79-residue polypeptide: Cell division topological specificity factor (79 aa).

Belongs to the MinE family.

Functionally, prevents the cell division inhibition by proteins MinC and MinD at internal division sites while permitting inhibition at polar sites. This ensures cell division at the proper site by restricting the formation of a division septum at the midpoint of the long axis of the cell. In Nitratiruptor sp. (strain SB155-2), this protein is Cell division topological specificity factor.